A 123-amino-acid polypeptide reads, in one-letter code: Class II hydrophobin 2 (123 aa).

The N-terminal stretch at 1–16 (MRSFLVIATLAVGAFG) is a signal peptide. Cystine bridges form between Cys22-Cys70, Cys32-Cys61, Cys33-Cys45, and Cys71-Cys82.

Belongs to the cerato-ulmin hydrophobin family. In terms of assembly, homodimer. Homodimers further self-assemble to form highly ordered films at water-air interfaces through intermolecular interactions.

It localises to the secreted. Its subcellular location is the cell wall. Functionally, aerial growth, conidiation, and dispersal of filamentous fungi in the environment rely upon a capability of their secreting small amphipathic proteins called hydrophobins (HPBs) with low sequence identity. Class I can self-assemble into an outermost layer of rodlet bundles on aerial cell surfaces, conferring cellular hydrophobicity that supports fungal growth, development and dispersal; whereas Class II form highly ordered films at water-air interfaces through intermolecular interactions but contribute nothing to the rodlet structure. Hyd2 is a class II hydrophobin that plays probably a role in intraspecific signaling or hyphal fusion. Not necessary for root adhesion and colonization. Might play an essential role since no deletion mutants could be obtained. The sequence is that of Class II hydrophobin 2 from Bionectria ochroleuca (Gliocladium roseum).